We begin with the raw amino-acid sequence, 105 residues long: UPF0235 protein RAF_ORF1191 (105 aa).

The protein belongs to the UPF0235 family.

This Rickettsia africae (strain ESF-5) protein is UPF0235 protein RAF_ORF1191.